The primary structure comprises 346 residues: Uroporphyrinogen decarboxylase (346 aa).

Substrate-binding positions include 23 to 27 (RQAGR), aspartate 72, tyrosine 149, threonine 204, and histidine 318.

It belongs to the uroporphyrinogen decarboxylase family. In terms of assembly, homodimer.

The protein localises to the cytoplasm. The catalysed reaction is uroporphyrinogen III + 4 H(+) = coproporphyrinogen III + 4 CO2. It functions in the pathway porphyrin-containing compound metabolism; protoporphyrin-IX biosynthesis; coproporphyrinogen-III from 5-aminolevulinate: step 4/4. In terms of biological role, catalyzes the decarboxylation of four acetate groups of uroporphyrinogen-III to yield coproporphyrinogen-III. This chain is Uroporphyrinogen decarboxylase, found in Synechococcus sp. (strain JA-2-3B'a(2-13)) (Cyanobacteria bacterium Yellowstone B-Prime).